We begin with the raw amino-acid sequence, 113 residues long: U11-theraphotoxin-Hhn1p (113 aa).

The N-terminal stretch at 1–21 is a signal peptide; it reads MNTVRVTFLLVFVLAVSLGQA. The propeptide occupies 22 to 74; the sequence is DKDENRMEMQEKTEQGKSYLDFAENLLLQKLEELEAKLLEEDSEESRNSRQKR. The interval 61 to 83 is disordered; that stretch reads EEDSEESRNSRQKRCIGEGVPCD. Intrachain disulfides connect Cys-75/Cys-90, Cys-82/Cys-95, and Cys-89/Cys-110.

Belongs to the neurotoxin 14 (magi-1) family. 01 (HNTX-16) subfamily. In terms of tissue distribution, expressed by the venom gland.

It is found in the secreted. Probable ion channel inhibitor. This Cyriopagopus hainanus (Chinese bird spider) protein is U11-theraphotoxin-Hhn1p.